A 113-amino-acid polypeptide reads, in one-letter code: Dynein light chain Tctex-type 1 (113 aa).

Position 1 is an N-acetylmethionine (Met1). Positions 41–113 are interaction with GNB1; that stretch reads QWTTNVVEQT…CIVSAFGLSI (73 aa).

Belongs to the dynein light chain Tctex-type family. In terms of assembly, homodimer. The cytoplasmic dynein 1 complex consists of two catalytic heavy chains (HCs) and a number of non-catalytic subunits presented by intermediate chains (ICs), light intermediate chains (LICs) and light chains (LCs); the composition seems to vary in respect to the IC, LIC and LC composition. The heavy chain homodimer serves as a scaffold for the probable homodimeric assembly of the respective non-catalytic subunits. The ICs and LICs bind directly to the HC dimer and dynein LCs assemble on the IC dimer. DYNLT1 and DYNLT3 compete for association with dynein IC (DYNC1I1 or DYNC1I2). Self-associates. Interacts with RHO. Interacts with DYNC1I1 and DYNC1I2. Interacts with DOC2A, DOC2B and SCN10A. Interacts with PVR. Interacts with SVIL isoform 2. Interacts with GNB1; the interaction occurs in presence of guanine nucleotide-binding protein G(T) subunit gamma; the interaction diminishes the association of DYNLT1 with dynein IC (DYNC1I1 or DYNC1I2). Interacts with GNB2, GNB3 and GNB5; the interactions occur in presence of guanine nucleotide-binding protein G(T) subunit gamma. Interacts with ACVR2B and ARHGEF2. Interacts with DNAI4. Interacts with CFAP61. Phosphorylated by BMPR2. The phosphorylation status is proposed to regulate the association with the cytoplasmic dynein complex and may have role in cytoplasmic dynein cargo release.

The protein localises to the golgi apparatus. Its subcellular location is the cytoplasm. It is found in the cytoskeleton. It localises to the spindle. Acts as one of several non-catalytic accessory components of the cytoplasmic dynein 1 complex that are thought to be involved in linking dynein to cargos and to adapter proteins that regulate dynein function. Cytoplasmic dynein 1 acts as a motor for the intracellular retrograde motility of vesicles and organelles along microtubules. Binds to transport cargos and is involved in apical cargo transport such as rhodopsin-bearing vesicles in polarized epithelia. Is involved in intracellular targeting of D-type retrovirus gag polyproteins to the cytoplasmic assembly site. May also be a accessory component of axonemal dynein. Its function is as follows. Plays a role in neuronal morphogenesis; the function is independent of cytoplasmic dynein and seems to be coupled to regulation of the actin cytoskeleton by enhancing Rac1 activity. Required for neurite outgrowth. The function in neurogenesis may be regulated by association with a G-protein beta-gamma dimer. May function as a receptor-independent activator of heterotrimeric G-protein signaling; the activation appears to be independent of a nucleotide exchange. Plays a role in regulating neurogenesis; inhibits the genesis of neurons from precursor cells during cortical development presumably by antagonizing ARHGEF2. Unrelated to the role in retrograde microtubule-associated movement may play a role in the dimerization of cytoplasmic proteins/domains such as for ACVR2B. Binds to the cytoplasmic domain of ACVR2B and, in vitro, inhibits ACVR2B signaling. Involved in the regulation of mitotic spindle orientation. The protein is Dynein light chain Tctex-type 1 (Dynlt1) of Rattus norvegicus (Rat).